We begin with the raw amino-acid sequence, 613 residues long: Proline--tRNA ligase (613 aa).

Belongs to the class-II aminoacyl-tRNA synthetase family. ProS type 1 subfamily. In terms of assembly, homodimer.

It localises to the cytoplasm. The enzyme catalyses tRNA(Pro) + L-proline + ATP = L-prolyl-tRNA(Pro) + AMP + diphosphate. Its function is as follows. Catalyzes the attachment of proline to tRNA(Pro) in a two-step reaction: proline is first activated by ATP to form Pro-AMP and then transferred to the acceptor end of tRNA(Pro). As ProRS can inadvertently accommodate and process non-cognate amino acids such as alanine and cysteine, to avoid such errors it has two additional distinct editing activities against alanine. One activity is designated as 'pretransfer' editing and involves the tRNA(Pro)-independent hydrolysis of activated Ala-AMP. The other activity is designated 'posttransfer' editing and involves deacylation of mischarged Ala-tRNA(Pro). The misacylated Cys-tRNA(Pro) is not edited by ProRS. The chain is Proline--tRNA ligase from Cyanothece sp. (strain PCC 7425 / ATCC 29141).